The sequence spans 621 residues: tRNA uridine 5-carboxymethylaminomethyl modification enzyme MnmG (621 aa).

FAD is bound at residue 9–14 (GGGHAG). 270–284 (GPRYCPSIEDKIVKF) contributes to the NAD(+) binding site.

Belongs to the MnmG family. In terms of assembly, homodimer. Heterotetramer of two MnmE and two MnmG subunits. Requires FAD as cofactor.

It is found in the cytoplasm. Functionally, NAD-binding protein involved in the addition of a carboxymethylaminomethyl (cmnm) group at the wobble position (U34) of certain tRNAs, forming tRNA-cmnm(5)s(2)U34. This is tRNA uridine 5-carboxymethylaminomethyl modification enzyme MnmG from Borreliella burgdorferi (strain ATCC 35210 / DSM 4680 / CIP 102532 / B31) (Borrelia burgdorferi).